Here is a 190-residue protein sequence, read N- to C-terminus: Protein PLANT CADMIUM RESISTANCE 8 (190 aa).

Positions 1 to 31 (MGRVTTPSEEDSNNGLPVQQPGTPNQRTRVP) are disordered. Positions 13 to 28 (NNGLPVQQPGTPNQRT) are enriched in polar residues. Phosphothreonine is present on threonine 23. Residues 94–113 (LGTFMYLLMMPALCSHWVMG) form a helical membrane-spanning segment.

Belongs to the cornifelin family.

Its subcellular location is the cell membrane. In terms of biological role, may be involved in heavy metals transport. This is Protein PLANT CADMIUM RESISTANCE 8 (PCR8) from Arabidopsis thaliana (Mouse-ear cress).